The sequence spans 170 residues: Prenyl-diphosphate phosphatase (170 aa).

The region spanning 25–155 (HIHRASQLIL…PGNYTPALRE (131 aa)) is the Nudix hydrolase domain. Residues 59 to 83 (YSVSGTVADESYEACIAREMLEEIG) carry the Nudix box motif. The Mg(2+) site is built by glutamate 77 and glutamate 81.

Belongs to the Nudix hydrolase family. It depends on Mg(2+) as a cofactor.

The enzyme catalyses dimethylallyl diphosphate + H2O = dimethylallyl phosphate + phosphate + H(+). It catalyses the reaction isopentenyl diphosphate + H2O = isopentenyl phosphate + phosphate + H(+). It carries out the reaction (2E,6E)-farnesyl diphosphate + H2O = (2E,6E)-farnesyl phosphate + phosphate + H(+). The catalysed reaction is (2E)-geranyl diphosphate + H2O = (2E)-geranyl phosphate + phosphate + H(+). It participates in isoprenoid biosynthesis. In terms of biological role, hydrolyzes homoallylic isopentenyl diphosphate (IPP), its allylic isomer dimethylallyl diphosphate (DMAPP) and short-chain prenyl diphosphates geranyl diphosphate (GPP) and farnesyl diphosphate (FPP) to their corresponding monophosphate forms with high activity. The preferred substrate is IPP. ADP, NADPH, Ap5A and thiamine diphosphate (TPP) are weakly hydrolyzed. No hydrolysis with ATP, dNTPs, 8-OH-dGTP, NAD+, FAD or acetyl-CoA. The likely physiological role of this enzyme is to provide a substrate dimethylallyl phosphate (DMAP) for prenylated flavin mononucleotide (prenyl-FMN) synthase MM_1871 involved in the biosynthesis of prenyl-FMN, a coenzyme required in the archaea-specific mevalonate pathway. The sequence is that of Prenyl-diphosphate phosphatase from Methanosarcina mazei (strain ATCC BAA-159 / DSM 3647 / Goe1 / Go1 / JCM 11833 / OCM 88) (Methanosarcina frisia).